A 660-amino-acid chain; its full sequence is Probable beta-hexosaminidase fdl (660 aa).

A signal peptide spans 1–36 (MSLAVSLRRALLVLLTGAIFILTVLYWNQGVTKAQA). N-linked (GlcNAc...) asparagine glycosylation is found at Asn210, Asn412, and Asn452.

The protein belongs to the glycosyl hydrolase 20 family. In third instar larval and early pupal brains, expressed in cells sending projections across the interhemispheric junction. In adult brain, expressed in mushroom body, ellipsoid body and pars intercerebralis.

It carries out the reaction Hydrolysis of terminal non-reducing N-acetyl-D-hexosamine residues in N-acetyl-beta-D-hexosaminides.. In terms of biological role, involved in brain restructurization via hormonal control during metamorphosis. Implicated in N-glycan processing. This is Probable beta-hexosaminidase fdl (fdl) from Drosophila melanogaster (Fruit fly).